The primary structure comprises 49 residues: Splenin (49 aa).

The LEM-like domain occupies 4–47 (LEDPSVLTKEKLKSELVANNVTLPAGEQRKEVYVELYLQHLTAL). The essential for biological activity stretch occupies residues 32-36 (RKEVY).

It belongs to the thymopoietin family.

Hormone of the spleen with pleiotropic actions on prothymocytes, mature T-cells, the nicotinic acetylcholine receptor, and pituitary corticotrophs. This chain is Splenin (SP), found in Bos taurus (Bovine).